We begin with the raw amino-acid sequence, 157 residues long: Endoribonuclease YbeY (157 aa).

Residues H116, H120, and H126 each coordinate Zn(2+).

This sequence belongs to the endoribonuclease YbeY family. Requires Zn(2+) as cofactor.

It is found in the cytoplasm. Its function is as follows. Single strand-specific metallo-endoribonuclease involved in late-stage 70S ribosome quality control and in maturation of the 3' terminus of the 16S rRNA. The sequence is that of Endoribonuclease YbeY from Paenarthrobacter aurescens (strain TC1).